The chain runs to 99 residues: Ferredoxin, vegetative (99 aa).

One can recognise a 2Fe-2S ferredoxin-type domain in the interval 4–96 (YQVRLINKKR…DCTIRTHQEP (93 aa)). 4 residues coordinate [2Fe-2S] cluster: cysteine 42, cysteine 47, cysteine 50, and cysteine 80.

The protein belongs to the 2Fe2S plant-type ferredoxin family. [2Fe-2S] cluster serves as cofactor.

Ferredoxins are iron-sulfur proteins that transfer electrons in a wide variety of metabolic reactions. Donates electrons to the nitrogenase 2. This chain is Ferredoxin, vegetative (fdxH2), found in Trichormus variabilis (strain ATCC 29413 / PCC 7937) (Anabaena variabilis).